Consider the following 348-residue polypeptide: Ketol-acid reductoisomerase (NADP(+)) (348 aa).

In terms of domain architecture, KARI N-terminal Rossmann spans 2–182 (AKTYYDHDAD…GCTRAGVLET (181 aa)). Residues 25-28 (YGSQ), Ser-51, Ser-53, and 83-86 (DTAQ) contribute to the NADP(+) site. Residue His-108 is part of the active site. Gly-134 is an NADP(+) binding site. The 146-residue stretch at 183–328 (TFKEETETDL…EKLRAAMPFL (146 aa)) folds into the KARI C-terminal knotted domain. The Mg(2+) site is built by Asp-191, Glu-195, Glu-227, and Glu-231. A substrate-binding site is contributed by Ser-252.

Belongs to the ketol-acid reductoisomerase family. Mg(2+) is required as a cofactor.

It carries out the reaction (2R)-2,3-dihydroxy-3-methylbutanoate + NADP(+) = (2S)-2-acetolactate + NADPH + H(+). The catalysed reaction is (2R,3R)-2,3-dihydroxy-3-methylpentanoate + NADP(+) = (S)-2-ethyl-2-hydroxy-3-oxobutanoate + NADPH + H(+). It functions in the pathway amino-acid biosynthesis; L-isoleucine biosynthesis; L-isoleucine from 2-oxobutanoate: step 2/4. It participates in amino-acid biosynthesis; L-valine biosynthesis; L-valine from pyruvate: step 2/4. In terms of biological role, involved in the biosynthesis of branched-chain amino acids (BCAA). Catalyzes an alkyl-migration followed by a ketol-acid reduction of (S)-2-acetolactate (S2AL) to yield (R)-2,3-dihydroxy-isovalerate. In the isomerase reaction, S2AL is rearranged via a Mg-dependent methyl migration to produce 3-hydroxy-3-methyl-2-ketobutyrate (HMKB). In the reductase reaction, this 2-ketoacid undergoes a metal-dependent reduction by NADPH to yield (R)-2,3-dihydroxy-isovalerate. In Acidobacterium capsulatum (strain ATCC 51196 / DSM 11244 / BCRC 80197 / JCM 7670 / NBRC 15755 / NCIMB 13165 / 161), this protein is Ketol-acid reductoisomerase (NADP(+)).